The sequence spans 443 residues: 26S proteasome regulatory subunit rpn501 (443 aa).

Phosphoserine is present on Ser-209. A PCI domain is found at 230–402 (DVCKYYRAVY…QVISFKKSQN (173 aa)).

It belongs to the proteasome subunit p55 family.

The protein localises to the nucleus. Functionally, acts as a regulatory subunit of the 26S proteasome which is involved in the ATP-dependent degradation of ubiquitinated proteins. Required for proper proteasome assembly. This Schizosaccharomyces pombe (strain 972 / ATCC 24843) (Fission yeast) protein is 26S proteasome regulatory subunit rpn501 (rpn501).